The primary structure comprises 60 residues: Conotoxin VnMRCL-012 (60 aa).

The signal sequence occupies residues 1–22 (MRCLPVFVILLLLIASAPGVDA). A propeptide spanning residues 23-50 (QPKTKYDVPLASRHDFAKKTPKRLSKPR) is cleaved from the precursor.

The protein belongs to the conotoxin T superfamily. Contains 2 disulfide bonds that can be either 'C1-C3, C2-C4' or 'C1-C4, C2-C3', since these disulfide connectivities have been observed for conotoxins with cysteine framework V (for examples, see AC P0DQQ7 and AC P81755). As to expression, expressed by the venom duct.

Its subcellular location is the secreted. This is Conotoxin VnMRCL-012 from Conus ventricosus (Mediterranean cone).